Consider the following 216-residue polypeptide: tRNA (guanine-N(7)-)-methyltransferase (216 aa).

The S-adenosyl-L-methionine site is built by Glu-44, Glu-69, Asn-96, and Asp-118. The active site involves Asp-118. Substrate is bound at residue Lys-122. The interval 124 to 129 (RHEKRR) is interaction with RNA. Substrate is bound by residues Asp-154 and 191-194 (TEYE).

It belongs to the class I-like SAM-binding methyltransferase superfamily. TrmB family.

It catalyses the reaction guanosine(46) in tRNA + S-adenosyl-L-methionine = N(7)-methylguanosine(46) in tRNA + S-adenosyl-L-homocysteine. It participates in tRNA modification; N(7)-methylguanine-tRNA biosynthesis. In terms of biological role, catalyzes the formation of N(7)-methylguanine at position 46 (m7G46) in tRNA. In Geobacillus thermodenitrificans (strain NG80-2), this protein is tRNA (guanine-N(7)-)-methyltransferase.